Reading from the N-terminus, the 431-residue chain is Enolase (431 aa).

(2R)-2-phosphoglycerate is bound at residue Q163. E205 serves as the catalytic Proton donor. The Mg(2+) site is built by D242, E288, and D315. 4 residues coordinate (2R)-2-phosphoglycerate: K340, R369, S370, and K391. K340 functions as the Proton acceptor in the catalytic mechanism.

This sequence belongs to the enolase family. It depends on Mg(2+) as a cofactor.

It is found in the cytoplasm. The protein resides in the secreted. Its subcellular location is the cell surface. It catalyses the reaction (2R)-2-phosphoglycerate = phosphoenolpyruvate + H2O. It participates in carbohydrate degradation; glycolysis; pyruvate from D-glyceraldehyde 3-phosphate: step 4/5. Catalyzes the reversible conversion of 2-phosphoglycerate (2-PG) into phosphoenolpyruvate (PEP). It is essential for the degradation of carbohydrates via glycolysis. The sequence is that of Enolase from Latilactobacillus sakei subsp. sakei (strain 23K) (Lactobacillus sakei subsp. sakei).